We begin with the raw amino-acid sequence, 334 residues long: NH(3)-dependent NAD(+) synthetase (334 aa).

47 to 54 contacts ATP; it reads GLSGGIDS. Asp-53 provides a ligand contact to Mg(2+). Arg-183 contributes to the deamido-NAD(+) binding site. ATP is bound at residue Thr-203. Residue Glu-208 participates in Mg(2+) binding. Residues Lys-216 and Asp-223 each contribute to the deamido-NAD(+) site. 2 residues coordinate ATP: Lys-232 and Thr-254.

This sequence belongs to the NAD synthetase family. In terms of assembly, homodimer.

It catalyses the reaction deamido-NAD(+) + NH4(+) + ATP = AMP + diphosphate + NAD(+) + H(+). It participates in cofactor biosynthesis; NAD(+) biosynthesis; NAD(+) from deamido-NAD(+) (ammonia route): step 1/1. Catalyzes the ATP-dependent amidation of deamido-NAD to form NAD. Uses ammonia as a nitrogen source. In Rhizobium meliloti (strain 1021) (Ensifer meliloti), this protein is NH(3)-dependent NAD(+) synthetase.